The following is a 185-amino-acid chain: Photosystem I assembly protein Ycf4 (185 aa).

2 helical membrane passes run 24–44 (YIIGGMLTIGGIGFLLASISS) and 66–86 (IIMGAYGVIANLLNFYLWYLV).

The protein belongs to the Ycf4 family.

The protein resides in the cellular thylakoid membrane. Its function is as follows. Seems to be required for the assembly of the photosystem I complex. This chain is Photosystem I assembly protein Ycf4, found in Prochlorococcus marinus (strain AS9601).